Reading from the N-terminus, the 411-residue chain is Putative competence-damage inducible protein (411 aa).

It belongs to the CinA family.

This chain is Putative competence-damage inducible protein, found in Alkaliphilus metalliredigens (strain QYMF).